A 922-amino-acid chain; its full sequence is Protein translocase subunit SecA (922 aa).

ATP contacts are provided by residues Q87, 105–109 (GEGKT), and D516. The interval 867 to 912 (YTAPTETGEPETLPDPRTAGAGGDGLNLPEGVRIGRNDPCPCGSGK) is disordered. Positions 906, 908, 917, and 918 each coordinate Zn(2+).

It belongs to the SecA family. Monomer and homodimer. Part of the essential Sec protein translocation apparatus which comprises SecA, SecYEG and auxiliary proteins SecDF-YajC and YidC. Requires Zn(2+) as cofactor.

The protein resides in the cell inner membrane. It is found in the cytoplasm. It catalyses the reaction ATP + H2O + cellular proteinSide 1 = ADP + phosphate + cellular proteinSide 2.. Its function is as follows. Part of the Sec protein translocase complex. Interacts with the SecYEG preprotein conducting channel. Has a central role in coupling the hydrolysis of ATP to the transfer of proteins into and across the cell membrane, serving both as a receptor for the preprotein-SecB complex and as an ATP-driven molecular motor driving the stepwise translocation of polypeptide chains across the membrane. The sequence is that of Protein translocase subunit SecA from Paracidovorax citrulli (strain AAC00-1) (Acidovorax citrulli).